We begin with the raw amino-acid sequence, 483 residues long: Glutamate--tRNA ligase (483 aa).

The short motif at 9 to 19 (PSPTGNLHIGT) is the 'HIGH' region element. Positions 250-254 (KLSKR) match the 'KMSKS' region motif. K253 serves as a coordination point for ATP.

Belongs to the class-I aminoacyl-tRNA synthetase family. Glutamate--tRNA ligase type 1 subfamily. In terms of assembly, monomer.

Its subcellular location is the cytoplasm. The catalysed reaction is tRNA(Glu) + L-glutamate + ATP = L-glutamyl-tRNA(Glu) + AMP + diphosphate. Its function is as follows. Catalyzes the attachment of glutamate to tRNA(Glu) in a two-step reaction: glutamate is first activated by ATP to form Glu-AMP and then transferred to the acceptor end of tRNA(Glu). The protein is Glutamate--tRNA ligase of Synechocystis sp. (strain ATCC 27184 / PCC 6803 / Kazusa).